We begin with the raw amino-acid sequence, 364 residues long: 3-isopropylmalate dehydrogenase (364 aa).

78-89 is a binding site for NAD(+); that stretch reads GPKWGTGAVRPE. Substrate-binding residues include R96, R106, R135, and D224. Mg(2+) is bound by residues D224, D249, and D253. 288-299 serves as a coordination point for NAD(+); it reads GSAPDLPANKVN.

This sequence belongs to the isocitrate and isopropylmalate dehydrogenases family. In terms of assembly, homodimer. Requires Mg(2+) as cofactor. The cofactor is Mn(2+).

It is found in the cytoplasm. It carries out the reaction (2R,3S)-3-isopropylmalate + NAD(+) = 4-methyl-2-oxopentanoate + CO2 + NADH. Its pathway is amino-acid biosynthesis; L-leucine biosynthesis; L-leucine from 3-methyl-2-oxobutanoate: step 3/4. Functionally, catalyzes the oxidation of 3-carboxy-2-hydroxy-4-methylpentanoate (3-isopropylmalate) to 3-carboxy-4-methyl-2-oxopentanoate. The product decarboxylates to 4-methyl-2 oxopentanoate. This Wickerhamomyces anomalus (strain ATCC 8168 / CBS 5759 / DSM 6766 / JCM 3585 / IAM 12210 / NCYC 432 / NBRC 10213 / NRRL Y-366 / AJ 5027) (Yeast) protein is 3-isopropylmalate dehydrogenase (LEU2).